A 211-amino-acid chain; its full sequence is Urease accessory protein UreF (211 aa).

The tract at residues 71–93 (DDADRETDARTPAPAARHASRSQ) is disordered.

This sequence belongs to the UreF family. As to quaternary structure, ureD, UreF and UreG form a complex that acts as a GTP-hydrolysis-dependent molecular chaperone, activating the urease apoprotein by helping to assemble the nickel containing metallocenter of UreC. The UreE protein probably delivers the nickel.

The protein localises to the cytoplasm. Functionally, required for maturation of urease via the functional incorporation of the urease nickel metallocenter. The chain is Urease accessory protein UreF from Mycobacterium tuberculosis (strain ATCC 25177 / H37Ra).